A 150-amino-acid polypeptide reads, in one-letter code: Troponin C, isoform 1 (150 aa).

An N-acetylmethionine modification is found at M1. EF-hand domains follow at residues 7 to 42, 43 to 78, 83 to 118, and 119 to 150; these read DQVQALQKAFNSFDTDDKGFITPDTVGVILRMMGVK, ISDRHLQEVISETDEDGSGEIEFEEFAALAAKFLSE, ALKKELKEAFRIYDRGGNGYITVHTLKEILRELDNK, and LTEDNLDSIIEEVDEDGSGTIDFNEFMKMMNG. Ca(2+) contacts are provided by D56, D58, S60, E62, and E67. The Ca(2+) site is built by D132, D134, S136, T138, and E143.

Belongs to the troponin C family.

Its function is as follows. Troponin is the central regulatory protein of striated muscle contraction. Tn consists of three components: Tn-I which is the inhibitor of actomyosin ATPase, Tn-T which contains the binding site for tropomyosin and Tn-C. The binding of calcium to Tn-C abolishes the inhibitory action of Tn on actin filaments. The polypeptide is Troponin C, isoform 1 (Homarus americanus (American lobster)).